A 493-amino-acid polypeptide reads, in one-letter code: Probable cytosol aminopeptidase (493 aa).

Mn(2+) contacts are provided by Lys-262 and Asp-267. The active site involves Lys-274. Positions 285, 344, and 346 each coordinate Mn(2+). The active site involves Arg-348.

It belongs to the peptidase M17 family. Requires Mn(2+) as cofactor.

Its subcellular location is the cytoplasm. The catalysed reaction is Release of an N-terminal amino acid, Xaa-|-Yaa-, in which Xaa is preferably Leu, but may be other amino acids including Pro although not Arg or Lys, and Yaa may be Pro. Amino acid amides and methyl esters are also readily hydrolyzed, but rates on arylamides are exceedingly low.. The enzyme catalyses Release of an N-terminal amino acid, preferentially leucine, but not glutamic or aspartic acids.. Its function is as follows. Presumably involved in the processing and regular turnover of intracellular proteins. Catalyzes the removal of unsubstituted N-terminal amino acids from various peptides. This Xanthomonas campestris pv. campestris (strain 8004) protein is Probable cytosol aminopeptidase.